We begin with the raw amino-acid sequence, 147 residues long: Lysozyme C-3 (147 aa).

The first 18 residues, Met1–Gly18, serve as a signal peptide directing secretion. One can recognise a C-type lysozyme domain in the interval Lys19–Leu147. Intrachain disulfides connect Cys24/Cys145, Cys48/Cys133, Cys83/Cys99, and Cys95/Cys113. Residues Glu53 and Asp71 contribute to the active site.

It belongs to the glycosyl hydrolase 22 family. In terms of assembly, monomer. As to expression, stomach-specific.

It catalyses the reaction Hydrolysis of (1-&gt;4)-beta-linkages between N-acetylmuramic acid and N-acetyl-D-glucosamine residues in a peptidoglycan and between N-acetyl-D-glucosamine residues in chitodextrins.. Functionally, lysozymes have primarily a bacteriolytic function; those in tissues and body fluids are associated with the monocyte-macrophage system and enhance the activity of immunoagents. The protein is Lysozyme C-3 (LYZ3) of Bos taurus (Bovine).